The sequence spans 92 residues: Long neurotoxin 1 (92 aa).

The first 21 residues, 1 to 21 (MKILLLTLVVVTIVCLDLAYT), serve as a signal peptide directing secretion. 5 cysteine pairs are disulfide-bonded: cysteine 24/cysteine 41, cysteine 34/cysteine 62, cysteine 47/cysteine 51, cysteine 66/cysteine 77, and cysteine 78/cysteine 83.

Belongs to the three-finger toxin family. Long-chain subfamily. Type II alpha-neurotoxin sub-subfamily. Expressed by the venom gland.

It is found in the secreted. Its function is as follows. Binds with high affinity to muscular (alpha-1/CHRNA1) and neuronal (alpha-7/CHRNA7) nicotinic acetylcholine receptor (nAChR) and inhibits acetylcholine from binding to the receptor, thereby impairing neuromuscular and neuronal transmission. The protein is Long neurotoxin 1 of Hydrophis hardwickii (Hardwick's spine-bellied seasnake).